The chain runs to 267 residues: Ras-related protein Rab-36 (267 aa).

Residues Val-68, Gly-69, Lys-70, Thr-71, Ser-72, Asp-83, Tyr-86, and Thr-89 each contribute to the GTP site. Thr-71 contacts Mg(2+). A Switch 1 motif is present at residues 76–94; it reads RLCKNVFDHDYKATIGVDF. Thr-89 and Asp-112 together coordinate Mg(2+). A Switch 2 motif is present at residues 113-132; sequence TAGQEKFKCIASAYYRGAQV. GTP contacts are provided by Gly-115, Lys-172, Asp-174, Ser-203, Ala-204, and Lys-205. S-geranylgeranyl cysteine attachment occurs at residues Cys-266 and Cys-267.

It belongs to the small GTPase superfamily. Rab family. The cofactor is Mg(2+).

Its subcellular location is the golgi apparatus membrane. The enzyme catalyses GTP + H2O = GDP + phosphate + H(+). Its activity is regulated as follows. Regulated by guanine nucleotide exchange factors (GEFs) which promote the exchange of bound GDP for free GTP. Regulated by GTPase activating proteins (GAPs) which increase the GTP hydrolysis activity. Inhibited by GDP dissociation inhibitors (GDIs). The small GTPases Rab are key regulators of intracellular membrane trafficking, from the formation of transport vesicles to their fusion with membranes. Rabs cycle between an inactive GDP-bound form and an active GTP-bound form that is able to recruit to membranes different sets of downstream effectors directly responsible for vesicle formation, movement, tethering and fusion. The chain is Ras-related protein Rab-36 from Mus musculus (Mouse).